The chain runs to 548 residues: Glucose-6-phosphate isomerase 1 (548 aa).

E353 acts as the Proton donor in catalysis. Active-site residues include H384 and K512.

It belongs to the GPI family.

It is found in the cytoplasm. The catalysed reaction is alpha-D-glucose 6-phosphate = beta-D-fructose 6-phosphate. It functions in the pathway carbohydrate biosynthesis; gluconeogenesis. The protein operates within carbohydrate degradation; glycolysis; D-glyceraldehyde 3-phosphate and glycerone phosphate from D-glucose: step 2/4. In terms of biological role, catalyzes the reversible isomerization of glucose-6-phosphate to fructose-6-phosphate. This is Glucose-6-phosphate isomerase 1 from Neisseria gonorrhoeae (strain ATCC 700825 / FA 1090).